Here is a 475-residue protein sequence, read N- to C-terminus: F-box protein At3g59150 (475 aa).

One can recognise an F-box domain in the interval 12–58 (GDVISNLPNDLLCRILSYLSTKEAALTSILSKRWSNLLLSIPILDFD).

This Arabidopsis thaliana (Mouse-ear cress) protein is F-box protein At3g59150.